The chain runs to 23 residues: Coenzyme PQQ synthesis protein A (23 aa).

The pyrroloquinoline quinone (Glu-Tyr) cross-link spans 15–19; it reads EVTLY.

Belongs to the PqqA family.

It functions in the pathway cofactor biosynthesis; pyrroloquinoline quinone biosynthesis. Its function is as follows. Required for coenzyme pyrroloquinoline quinone (PQQ) biosynthesis. PQQ is probably formed by cross-linking a specific glutamate to a specific tyrosine residue and excising these residues from the peptide. This chain is Coenzyme PQQ synthesis protein A, found in Pseudomonas aeruginosa (strain UCBPP-PA14).